The sequence spans 82 residues: UPF0180 protein BH2667 (82 aa).

Belongs to the UPF0180 family.

The chain is UPF0180 protein BH2667 from Halalkalibacterium halodurans (strain ATCC BAA-125 / DSM 18197 / FERM 7344 / JCM 9153 / C-125) (Bacillus halodurans).